Consider the following 198-residue polypeptide: Imidazole glycerol phosphate synthase subunit HisH (198 aa).

One can recognise a Glutamine amidotransferase type-1 domain in the interval 2 to 198; the sequence is KALLIDYGSG…ALARRYFEVL (197 aa). Cysteine 80 acts as the Nucleophile in catalysis. Active-site residues include histidine 176 and glutamate 178.

Heterodimer of HisH and HisF.

The protein resides in the cytoplasm. The catalysed reaction is 5-[(5-phospho-1-deoxy-D-ribulos-1-ylimino)methylamino]-1-(5-phospho-beta-D-ribosyl)imidazole-4-carboxamide + L-glutamine = D-erythro-1-(imidazol-4-yl)glycerol 3-phosphate + 5-amino-1-(5-phospho-beta-D-ribosyl)imidazole-4-carboxamide + L-glutamate + H(+). It catalyses the reaction L-glutamine + H2O = L-glutamate + NH4(+). It functions in the pathway amino-acid biosynthesis; L-histidine biosynthesis; L-histidine from 5-phospho-alpha-D-ribose 1-diphosphate: step 5/9. In terms of biological role, IGPS catalyzes the conversion of PRFAR and glutamine to IGP, AICAR and glutamate. The HisH subunit catalyzes the hydrolysis of glutamine to glutamate and ammonia as part of the synthesis of IGP and AICAR. The resulting ammonia molecule is channeled to the active site of HisF. The polypeptide is Imidazole glycerol phosphate synthase subunit HisH (Thermus thermophilus (strain ATCC BAA-163 / DSM 7039 / HB27)).